Here is a 406-residue protein sequence, read N- to C-terminus: Peptide antibiotic transporter SbmA (406 aa).

Over 1 to 11 (MFKSFFPKPGT) the chain is Periplasmic. A helical transmembrane segment spans residues 12–32 (FFLSAFVWALIAVIFWQAGGG). The Cytoplasmic segment spans residues 33 to 56 (DWVARITGASGQIPISAARFWSLD). Residues 57-77 (FLIFYAYYIVCVGLFALFWFI) form a helical membrane-spanning segment. At 78-87 (YSPHRWQYWS) the chain is on the periplasmic side. Residues 88–108 (ILGTALIIFVTWFLVEVGVAV) traverse the membrane as a helical segment. Topologically, residues 109–137 (NAWYAPFYDLIQTALSSPHKVTIEQFYRE) are cytoplasmic. A helical membrane pass occupies residues 138–158 (VGVFLGIALIAVVISVLNNFF). The Periplasmic segment spans residues 159-205 (VSHYVFRWRTAMNEYYMANWQQLRHIEGAAQRVQEDTMRFASTLENM). A helical transmembrane segment spans residues 206 to 226 (GVSFINAIMTLIAFLPVLVTL). The Cytoplasmic portion of the chain corresponds to 227-242 (SAHVPELPIIGHIPYG). A helical transmembrane segment spans residues 243–263 (LVIAAIVWSLMGTGLLAVVGI). At 264–331 (KLPGLEFKNQ…ARILYLQVDN (68 aa)) the chain is on the periplasmic side. Residues 332–352 (VFGLFLLFPSIVAGTITLGLM) form a helical membrane-spanning segment. Residues 353–406 (TQITNVFGQVRGAFQYLINSWTTLVELMSIYKRLRSFEHELDGDKIQEVTHTLS) lie on the Cytoplasmic side of the membrane.

This sequence belongs to the peptide uptake permease (PUP) (TC 9.A.18) family.

Its subcellular location is the cell inner membrane. Its function is as follows. Uptake of antimicrobial peptides. The sequence is that of Peptide antibiotic transporter SbmA (sbmA) from Escherichia coli O157:H7.